Consider the following 193-residue polypeptide: Non-specific lipid transfer protein GPI-anchored 10 (193 aa).

A signal peptide spans 1-24 (MASSTLLITLLISLSAFFLRMVLA). Disulfide bonds link C30/C71, C40/C55, C56/C98, and C69/C107. N76, N87, and N103 each carry an N-linked (GlcNAc...) asparagine glycan. Residues 109-140 (SSFPGEAPSDSSSVAPPPSSSTGSQISQGAKN) are disordered. Residues 116 to 132 (PSDSSSVAPPPSSSTGS) are compositionally biased toward low complexity. N140 is a glycosylation site (N-linked (GlcNAc...) asparagine). The GPI-anchor amidated serine moiety is linked to residue S168. The propeptide at 169–193 (SGSKSEIQLTIFALAAILPAALLLI) is removed in mature form.

This sequence belongs to the plant LTP family.

The protein resides in the cell membrane. Its function is as follows. Probable lipid transfer protein. This chain is Non-specific lipid transfer protein GPI-anchored 10, found in Arabidopsis thaliana (Mouse-ear cress).